Reading from the N-terminus, the 104-residue chain is MNNKYFLTKIDLQFFASKKGVGSTKNGRDSHAKRLGAKKADGQMIRTGQIIYRQRGTRVYPGVNVGLGSDDTLFALSDGLVKYQKFGPKQGKTRVSVVKHKLDA.

Residues 1–15 constitute a propeptide that is removed on maturation; that stretch reads MNNKYFLTKIDLQFF.

Belongs to the bacterial ribosomal protein bL27 family. In terms of processing, the N-terminus is cleaved by ribosomal processing cysteine protease Prp.

The protein is Large ribosomal subunit protein bL27 of Mycoplasma pneumoniae (strain ATCC 29342 / M129 / Subtype 1) (Mycoplasmoides pneumoniae).